Reading from the N-terminus, the 151-residue chain is Transcription antitermination protein NusB (151 aa).

This sequence belongs to the NusB family.

Involved in transcription antitermination. Required for transcription of ribosomal RNA (rRNA) genes. Binds specifically to the boxA antiterminator sequence of the ribosomal RNA (rrn) operons. The protein is Transcription antitermination protein NusB of Hamiltonella defensa subsp. Acyrthosiphon pisum (strain 5AT).